Consider the following 456-residue polypeptide: Argininosuccinate lyase (456 aa).

The protein belongs to the lyase 1 family. Argininosuccinate lyase subfamily.

The protein localises to the cytoplasm. The enzyme catalyses 2-(N(omega)-L-arginino)succinate = fumarate + L-arginine. Its pathway is amino-acid biosynthesis; L-arginine biosynthesis; L-arginine from L-ornithine and carbamoyl phosphate: step 3/3. The sequence is that of Argininosuccinate lyase from Listeria monocytogenes serotype 4a (strain HCC23).